We begin with the raw amino-acid sequence, 124 residues long: Protein RibT (124 aa).

The 122-residue stretch at 3 to 124 folds into the N-acetyltransferase domain; that stretch reads IRYKKSFEKI…QQDQDISYNN (122 aa).

In terms of biological role, involved in riboflavin biosynthesis. The protein is Protein RibT (ribT) of Bacillus subtilis (strain 168).